We begin with the raw amino-acid sequence, 293 residues long: Small ribosomal subunit protein uS5 (293 aa).

The segment at 1 to 56 (MADDAGAAGGPGGPGGPGMGNRGGFRGGFGSGIRGRGRGRGRGRGRGRGARGGKAE) is disordered. Ala-2 is modified (N-acetylalanine). Residues 7–34 (AAGGPGGPGGPGMGNRGGFRGGFGSGIR) are compositionally biased toward gly residues. Residues 35–51 (GRGRGRGRGRGRGRGAR) show a composition bias toward basic residues. Residues Lys-54 and Lys-58 each participate in a glycyl lysine isopeptide (Lys-Gly) (interchain with G-Cter in ubiquitin) cross-link. Residues 102–165 (LKDEVLKIMP…ILAKLSIVPV (64 aa)) form the S5 DRBM domain. Thr-252 is modified (phosphothreonine). Lys-263 is modified (N6-acetyllysine). Ser-264 bears the Phosphoserine mark. Thr-270 carries the post-translational modification Phosphothreonine. Lys-275 is subject to N6-acetyllysine; alternate. A Glycyl lysine isopeptide (Lys-Gly) (interchain with G-Cter in SUMO1); alternate cross-link involves residue Lys-275. Lys-275 is covalently cross-linked (Glycyl lysine isopeptide (Lys-Gly) (interchain with G-Cter in SUMO2); alternate). A Glycyl lysine isopeptide (Lys-Gly) (interchain with G-Cter in ubiquitin); alternate cross-link involves residue Lys-275. The residue at position 281 (Ser-281) is a Phosphoserine.

Belongs to the universal ribosomal protein uS5 family. Component of the small ribosomal subunit. Interacts with zinc finger protein ZNF277 (via zinc-finger domains); the interaction is direct; the interaction is extra-ribosomal. Interaction with ZNF277 competes with the binding of RPS2 to protein arginine methyltransferase PRMT3. In terms of processing, citrullinated by PADI4 in the Arg/Gly-rich region. Post-translationally, asymmetric arginine dimethylation by PRMT3 occurs at multiple sites in the Arg/Gly-rich region. Monoubiquitinated at Lys-54 and Lys-58 by RNF10 when a ribosome has stalled during translation, leading to its degradation by the proteasome. Deubiquitinated at Lys-54 and Lys-58 by USP10, preventing degradation by the proteasome and promoting 40S ribosome subunit recycling following ribosome dissociation.

The protein localises to the cytoplasm. Its subcellular location is the nucleus. The protein resides in the nucleolus. Component of the ribosome, a large ribonucleoprotein complex responsible for the synthesis of proteins in the cell. The small ribosomal subunit (SSU) binds messenger RNAs (mRNAs) and translates the encoded message by selecting cognate aminoacyl-transfer RNA (tRNA) molecules. The large subunit (LSU) contains the ribosomal catalytic site termed the peptidyl transferase center (PTC), which catalyzes the formation of peptide bonds, thereby polymerizing the amino acids delivered by tRNAs into a polypeptide chain. The nascent polypeptides leave the ribosome through a tunnel in the LSU and interact with protein factors that function in enzymatic processing, targeting, and the membrane insertion of nascent chains at the exit of the ribosomal tunnel. Plays a role in the assembly and function of the 40S ribosomal subunit. Mutations in this protein affects the control of translational fidelity. Involved in nucleolar processing of pre-18S ribosomal RNA and ribosome assembly. This chain is Small ribosomal subunit protein uS5 (RPS2), found in Homo sapiens (Human).